A 304-amino-acid polypeptide reads, in one-letter code: Homoserine kinase (304 aa).

An ATP-binding site is contributed by 90-100 (PLARGLGSSAS).

Belongs to the GHMP kinase family. Homoserine kinase subfamily.

The protein resides in the cytoplasm. It carries out the reaction L-homoserine + ATP = O-phospho-L-homoserine + ADP + H(+). Its pathway is amino-acid biosynthesis; L-threonine biosynthesis; L-threonine from L-aspartate: step 4/5. Functionally, catalyzes the ATP-dependent phosphorylation of L-homoserine to L-homoserine phosphate. The sequence is that of Homoserine kinase from Staphylococcus aureus (strain JH9).